The chain runs to 466 residues: Adenosylhomocysteinase (466 aa).

Substrate contacts are provided by T57, D132, and E192. 193 to 195 (TTT) contributes to the NAD(+) binding site. Substrate contacts are provided by K222 and D226. NAD(+) is bound by residues N227, 256-261 (GYGDVG), E279, N314, 335-337 (IGH), and N380.

The protein belongs to the adenosylhomocysteinase family. The cofactor is NAD(+).

The protein localises to the cytoplasm. It carries out the reaction S-adenosyl-L-homocysteine + H2O = L-homocysteine + adenosine. Its pathway is amino-acid biosynthesis; L-homocysteine biosynthesis; L-homocysteine from S-adenosyl-L-homocysteine: step 1/1. Its function is as follows. May play a key role in the regulation of the intracellular concentration of adenosylhomocysteine. The protein is Adenosylhomocysteinase of Sinorhizobium medicae (strain WSM419) (Ensifer medicae).